The primary structure comprises 59 residues: Large ribosomal subunit protein uL30 (59 aa).

It belongs to the universal ribosomal protein uL30 family. In terms of assembly, part of the 50S ribosomal subunit.

The protein is Large ribosomal subunit protein uL30 of Listeria innocua serovar 6a (strain ATCC BAA-680 / CLIP 11262).